Reading from the N-terminus, the 631-residue chain is PTS system glucosamine-specific EIICBA component (631 aa).

Residues 3–382 enclose the PTS EIIC type-1 domain; that stretch reads KKAFQILQQL…WNLKTPGRET (380 aa). 8 helical membrane passes run 12-32, 56-76, 106-126, 149-169, 196-216, 243-263, 298-318, and 350-370; these read LGRA…LLRF, LIFA…AGLA, HLID…AYLY, IITS…WPLI, LLIP…MMGE, FMMG…LAII, FLFV…VIFV, and VVIP…RFAI. The 82-residue stretch at 397 to 478 folds into the PTS EIIB type-1 domain; the sequence is DQLAFHVLQA…KTIMAGGVPA (82 aa). C419 acts as the Phosphocysteine intermediate; for EIIB activity in catalysis. At C419 the chain carries Phosphocysteine. Residues 515-619 enclose the PTS EIIA type-1 domain; the sequence is DQVFSEKMMG…SAITPVIFTN (105 aa). The active-site Tele-phosphohistidine intermediate; for EIIA activity is the H567. Phosphohistidine is present on H567.

The protein resides in the cell membrane. It carries out the reaction D-glucosamine(out) + N(pros)-phospho-L-histidyl-[protein] = D-glucosamine 6-phosphate(in) + L-histidyl-[protein]. Its function is as follows. The phosphoenolpyruvate-dependent sugar phosphotransferase system (sugar PTS), a major carbohydrate active transport system, catalyzes the phosphorylation of incoming sugar substrates concomitantly with their translocation across the cell membrane. This system is involved in glucosamine transport. In vitro, when expressed in the absence of GamR and NagP, can transport N-acetylglucosamine. In terms of biological role, in addition, plays an important role in the phosphorylation of EIIA-deficient PTS transporters. The EIIA domain can transfer a phosphoryl group to EIIA-deficient PTS transporters, enabling growth with maltose, N-acetylglucosamine, sucrose or trehalose as the sole carbon source. This chain is PTS system glucosamine-specific EIICBA component, found in Bacillus subtilis (strain 168).